We begin with the raw amino-acid sequence, 382 residues long: Carbamoyl phosphate synthase small chain (382 aa).

Positions 1-189 (MIKSALLVLE…GLPEAKSEDD (189 aa)) are CPSase. 3 residues coordinate L-glutamine: Ser-47, Gly-241, and Gly-243. The 188-residue stretch at 193-380 (HVVAYDFGAK…IELIEQYRQS (188 aa)) folds into the Glutamine amidotransferase type-1 domain. Cys-269 acts as the Nucleophile in catalysis. The L-glutamine site is built by Leu-270, Gln-273, Asn-311, Gly-313, and Phe-314. Catalysis depends on residues His-353 and Glu-355.

It belongs to the CarA family. Composed of two chains; the small (or glutamine) chain promotes the hydrolysis of glutamine to ammonia, which is used by the large (or ammonia) chain to synthesize carbamoyl phosphate. Tetramer of heterodimers (alpha,beta)4.

The catalysed reaction is hydrogencarbonate + L-glutamine + 2 ATP + H2O = carbamoyl phosphate + L-glutamate + 2 ADP + phosphate + 2 H(+). The enzyme catalyses L-glutamine + H2O = L-glutamate + NH4(+). Its pathway is amino-acid biosynthesis; L-arginine biosynthesis; carbamoyl phosphate from bicarbonate: step 1/1. It functions in the pathway pyrimidine metabolism; UMP biosynthesis via de novo pathway; (S)-dihydroorotate from bicarbonate: step 1/3. Functionally, small subunit of the glutamine-dependent carbamoyl phosphate synthetase (CPSase). CPSase catalyzes the formation of carbamoyl phosphate from the ammonia moiety of glutamine, carbonate, and phosphate donated by ATP, constituting the first step of 2 biosynthetic pathways, one leading to arginine and/or urea and the other to pyrimidine nucleotides. The small subunit (glutamine amidotransferase) binds and cleaves glutamine to supply the large subunit with the substrate ammonia. The protein is Carbamoyl phosphate synthase small chain of Salmonella typhimurium (strain LT2 / SGSC1412 / ATCC 700720).